Reading from the N-terminus, the 166-residue chain is Crossover junction endodeoxyribonuclease RuvC (166 aa).

Catalysis depends on residues D9, E70, and D144. Mg(2+) contacts are provided by D9, E70, and D144.

It belongs to the RuvC family. In terms of assembly, homodimer which binds Holliday junction (HJ) DNA. The HJ becomes 2-fold symmetrical on binding to RuvC with unstacked arms; it has a different conformation from HJ DNA in complex with RuvA. In the full resolvosome a probable DNA-RuvA(4)-RuvB(12)-RuvC(2) complex forms which resolves the HJ. Mg(2+) is required as a cofactor.

Its subcellular location is the cytoplasm. It carries out the reaction Endonucleolytic cleavage at a junction such as a reciprocal single-stranded crossover between two homologous DNA duplexes (Holliday junction).. The RuvA-RuvB-RuvC complex processes Holliday junction (HJ) DNA during genetic recombination and DNA repair. Endonuclease that resolves HJ intermediates. Cleaves cruciform DNA by making single-stranded nicks across the HJ at symmetrical positions within the homologous arms, yielding a 5'-phosphate and a 3'-hydroxyl group; requires a central core of homology in the junction. The consensus cleavage sequence is 5'-(A/T)TT(C/G)-3'. Cleavage occurs on the 3'-side of the TT dinucleotide at the point of strand exchange. HJ branch migration catalyzed by RuvA-RuvB allows RuvC to scan DNA until it finds its consensus sequence, where it cleaves and resolves the cruciform DNA. The protein is Crossover junction endodeoxyribonuclease RuvC of Neorickettsia sennetsu (strain ATCC VR-367 / Miyayama) (Ehrlichia sennetsu).